The chain runs to 1120 residues: ISWI chromatin-remodeling complex ATPase ISW2 (1120 aa).

The span at 1-16 (MTTQQEEQRSDTKNSK) shows a compositional bias: basic and acidic residues. Disordered regions lie at residues 1-58 (MTTQ…VEDR) and 129-153 (LSKSHSTVSSSSRHHRKTEKEEDAE). A phosphoserine mark is found at S17 and S19. Basic and acidic residues predominate over residues 47-58 (LSDKEIYTVEDR). One can recognise a Helicase ATP-binding domain in the interval 196–361 (ISLHENKLSG…WALLNFLLPD (166 aa)). Position 209-216 (209-216 (DEMGLGKT)) interacts with ATP. The DEAH box motif lies at 312 to 315 (DEAH). The Helicase C-terminal domain maps to 494 to 645 (ILDKLLKRLK…QLVIQQGTGK (152 aa)). Disordered regions lie at residues 764–783 (GGGSKSASKQTPQPKAPRAP) and 828–853 (NEGSDAEEEEGEYKNAANTEGHKGHE). S831 bears the Phosphoserine mark. One can recognise an SANT domain in the interval 886-938 (KAFTNWNKRDFMAFINACAKYGRDDMENIKKSIDSKTPEEVEVYAKIFWERLK). The segment at 1062-1120 (PDANKKKRSRTSATREDTPLSQNESTRASTVPNLPTTMVTNQKDTNDHVDKRTKIDQEA) is disordered. T1079 is modified (phosphothreonine). Residues 1080 to 1104 (PLSQNESTRASTVPNLPTTMVTNQK) show a composition bias toward polar residues. Phosphoserine is present on S1082. The span at 1105–1120 (DTNDHVDKRTKIDQEA) shows a compositional bias: basic and acidic residues.

The protein belongs to the SNF2/RAD54 helicase family. ISWI subfamily. As to quaternary structure, component of the ISW2 complex, which at least consists of ISW2, ITC1, DLS1 and DPB4. May form a stable subcomplex with ITC1.

Its subcellular location is the nucleus. In terms of biological role, catalytic component of the ISW2 complex, which acts in remodeling the chromatin by catalyzing an ATP-dependent alteration in the structure of nucleosomal DNA. The ISW2 complex is involved in coordinating transcriptional repression and in inheritance of telomeric silencing. It is involved in repression of MAT a-specific genes, INO1, and early meiotic genes during mitotic growth dependent upon transcription factor UME6 and in a parallel pathway to the RPD3-SIN3 histone deacetylase complex. In Saccharomyces cerevisiae (strain ATCC 204508 / S288c) (Baker's yeast), this protein is ISWI chromatin-remodeling complex ATPase ISW2 (ISW2).